We begin with the raw amino-acid sequence, 867 residues long: Xylosyltransferase 2 (867 aa).

The Cytoplasmic portion of the chain corresponds to 1–15; that stretch reads MVASARVQKLVRRYK. A helical; Signal-anchor for type II membrane protein membrane pass occupies residues 16–36; sequence LAIATALAILLLQGLVVWSFS. At 37 to 867 the chain is on the lumenal side; sequence VLEDDEPGEK…GPVKADGRLR (831 aa). The segment at 41–122 is disordered; it reads DEPGEKGRQK…PPPEAPGRQN (82 aa). The segment covering 53-65 has biased composition (basic and acidic residues); it reads RPLDPSEGSKDTD. The segment covering 73–82 has biased composition (basic residues); the sequence is SAGRRHGRWR. An N-linked (GlcNAc...) asparagine glycan is attached at asparagine 122. 2 disulfides stabilise this stretch: cysteine 161/cysteine 189 and cysteine 205/cysteine 447. Residues valine 238, aspartate 266, and 295-297 each bind UDP-alpha-D-xylose; that span reads TIW. A glycan (N-linked (GlcNAc...) asparagine) is linked at asparagine 326. UDP-alpha-D-xylose contacts are provided by residues 399–400, serine 480, and 503–504; these read DW and RK. Intrachain disulfides connect cysteine 580–cysteine 835 and cysteine 828–cysteine 841. N-linked (GlcNAc...) asparagine glycosylation occurs at asparagine 685.

This sequence belongs to the glycosyltransferase 14 family. XylT subfamily. In terms of assembly, monomer. Mg(2+) serves as cofactor. The cofactor is Mn(2+). In terms of processing, contains disulfide bonds.

It is found in the golgi apparatus membrane. The protein localises to the secreted. The enzyme catalyses UDP-alpha-D-xylose + L-seryl-[protein] = 3-O-(beta-D-xylosyl)-L-seryl-[protein] + UDP + H(+). Its pathway is glycan metabolism; chondroitin sulfate biosynthesis. It participates in glycan metabolism; heparan sulfate biosynthesis. In terms of biological role, catalyzes the first step in the biosynthesis of chondroitin sulfate, heparan sulfate and dermatan sulfate proteoglycans, such as DCN. Transfers D-xylose from UDP-D-xylose to specific serine residues of the core protein. In Bos taurus (Bovine), this protein is Xylosyltransferase 2 (XYLT2).